Here is a 108-residue protein sequence, read N- to C-terminus: Urease subunit gamma (108 aa).

This sequence belongs to the urease gamma subunit family. As to quaternary structure, heterotrimer of UreA (gamma), UreB (beta) and UreC (alpha) subunits. Three heterotrimers associate to form the active enzyme.

It is found in the cytoplasm. The enzyme catalyses urea + 2 H2O + H(+) = hydrogencarbonate + 2 NH4(+). It participates in nitrogen metabolism; urea degradation; CO(2) and NH(3) from urea (urease route): step 1/1. The protein is Urease subunit gamma of Trichodesmium erythraeum (strain IMS101).